Reading from the N-terminus, the 317-residue chain is Ribonuclease H2 subunit A (317 aa).

An RNase H type-2 domain is found at 43-270; that stretch reads PCCLGVDEAG…AKDMLETKGG (228 aa). 3 residues coordinate a divalent metal cation: Asp-49, Glu-50, and Asp-166.

It belongs to the RNase HII family. Eukaryotic subfamily. Requires Mn(2+) as cofactor. It depends on Mg(2+) as a cofactor.

It carries out the reaction Endonucleolytic cleavage to 5'-phosphomonoester.. In terms of biological role, endonuclease that specifically degrades the RNA of RNA-DNA hybrids. Participates in DNA replication. The polypeptide is Ribonuclease H2 subunit A (rnh-201) (Neurospora crassa (strain ATCC 24698 / 74-OR23-1A / CBS 708.71 / DSM 1257 / FGSC 987)).